A 511-amino-acid chain; its full sequence is Maturase K (511 aa).

This sequence belongs to the intron maturase 2 family. MatK subfamily.

Its subcellular location is the plastid. It localises to the chloroplast. Usually encoded in the trnK tRNA gene intron. Probably assists in splicing its own and other chloroplast group II introns. This Hordeum secalinum (Meadow barley) protein is Maturase K.